The chain runs to 171 residues: NADH-quinone oxidoreductase subunit I (171 aa).

4Fe-4S ferredoxin-type domains are found at residues 41-71 (LTRD…LQKT) and 81-110 (EFFR…LTPD). The [4Fe-4S] cluster site is built by Cys51, Cys54, Cys57, Cys61, Cys90, Cys93, Cys96, and Cys100.

The protein belongs to the complex I 23 kDa subunit family. As to quaternary structure, NDH-1 is composed of 14 different subunits. Subunits NuoA, H, J, K, L, M, N constitute the membrane sector of the complex. The cofactor is [4Fe-4S] cluster.

The protein localises to the cell inner membrane. It catalyses the reaction a quinone + NADH + 5 H(+)(in) = a quinol + NAD(+) + 4 H(+)(out). NDH-1 shuttles electrons from NADH, via FMN and iron-sulfur (Fe-S) centers, to quinones in the respiratory chain. The immediate electron acceptor for the enzyme in this species is believed to be ubiquinone. Couples the redox reaction to proton translocation (for every two electrons transferred, four hydrogen ions are translocated across the cytoplasmic membrane), and thus conserves the redox energy in a proton gradient. This Methylococcus capsulatus (strain ATCC 33009 / NCIMB 11132 / Bath) protein is NADH-quinone oxidoreductase subunit I.